A 382-amino-acid polypeptide reads, in one-letter code: Putative UDP-sugar transporter DDB_G0278631 (382 aa).

7 consecutive transmembrane segments (helical) span residues 117–137 (FSAS…ILHI), 183–203 (MYSA…YFIL), 211–231 (IIAS…TDLS), 234–254 (SLGY…LIYV), 264–284 (YDML…LMIV), 302–322 (FQAY…CIFF), and 354–374 (IIIH…SIWY).

The protein belongs to the TPT transporter family. SLC35D subfamily.

The protein resides in the membrane. In terms of biological role, may be nvolved in the import of UDP-sugars. The protein is Putative UDP-sugar transporter DDB_G0278631 of Dictyostelium discoideum (Social amoeba).